A 197-amino-acid chain; its full sequence is Histidine biosynthesis bifunctional protein HisIE (197 aa).

The interval 1–108 is phosphoribosyl-AMP cyclohydrolase; the sequence is MMTLYPVVVQ…RFEETGSPTF (108 aa). The interval 109–197 is phosphoribosyl-ATP pyrophosphohydrolase; that stretch reads WLELYRLVRK…VMRELEKRRK (89 aa).

It in the N-terminal section; belongs to the PRA-CH family. This sequence in the C-terminal section; belongs to the PRA-PH family.

The protein resides in the cytoplasm. The catalysed reaction is 1-(5-phospho-beta-D-ribosyl)-ATP + H2O = 1-(5-phospho-beta-D-ribosyl)-5'-AMP + diphosphate + H(+). It carries out the reaction 1-(5-phospho-beta-D-ribosyl)-5'-AMP + H2O = 1-(5-phospho-beta-D-ribosyl)-5-[(5-phospho-beta-D-ribosylamino)methylideneamino]imidazole-4-carboxamide. It functions in the pathway amino-acid biosynthesis; L-histidine biosynthesis; L-histidine from 5-phospho-alpha-D-ribose 1-diphosphate: step 2/9. It participates in amino-acid biosynthesis; L-histidine biosynthesis; L-histidine from 5-phospho-alpha-D-ribose 1-diphosphate: step 3/9. The sequence is that of Histidine biosynthesis bifunctional protein HisIE (hisI) from Thermotoga maritima (strain ATCC 43589 / DSM 3109 / JCM 10099 / NBRC 100826 / MSB8).